The primary structure comprises 103 residues: Putative defensin-like protein 305 (103 aa).

Positions 1 to 31 (MREEILEIFLLVNFVFILCTSIMVRIRYVSC) are cleaved as a signal peptide. Intrachain disulfides connect C31–C51, C37–C56, and C42–C58.

This sequence belongs to the DEFL family.

It is found in the secreted. The sequence is that of Putative defensin-like protein 305 from Arabidopsis thaliana (Mouse-ear cress).